Reading from the N-terminus, the 231-residue chain is ADP-ribose pyrophosphatase (231 aa).

Phenylalanine 2 bears the N-acetylserine mark. Substrate is bound by residues tryptophan 46, 64–65 (WD), arginine 69, and arginine 103. Residues 75–214 (GGVDGIGILT…DQQGYKLDAR (140 aa)) form the Nudix hydrolase domain. Mg(2+) is bound at residue alanine 115. The Nudix box signature appears at 116–137 (GLIDAGEDIDTAALRELKEETG). Residue leucine 117 coordinates substrate. Mg(2+) contacts are provided by glutamate 131 and glutamate 135. Aspartate 152 is a binding site for substrate. Glutamate 185 serves as a coordination point for Mg(2+).

It belongs to the Nudix hydrolase family. NudF subfamily. It depends on Mg(2+) as a cofactor. Mn(2+) serves as cofactor.

It carries out the reaction ADP-D-ribose + H2O = D-ribose 5-phosphate + AMP + 2 H(+). In Saccharomyces cerevisiae (strain ATCC 204508 / S288c) (Baker's yeast), this protein is ADP-ribose pyrophosphatase (YSA1).